Here is a 276-residue protein sequence, read N- to C-terminus: Aurora kinase C (276 aa).

Positions 16-266 (FEIGRPLGRG…LAQVLKHPWV (251 aa)) constitute a Protein kinase domain. ATP contacts are provided by residues 22 to 30 (LGRGKFGRV) and Lys45. The Proton acceptor role is filled by Asp139. Residue Thr171 is modified to Phosphothreonine; by PKA.

It belongs to the protein kinase superfamily. Ser/Thr protein kinase family. Aurora subfamily. Component of the chromosomal passenger complex (CPC) composed of at least BIRC5/survivin, CDCA8/borealin, INCENP, AURKB or AURKC; predominantly independent AURKB- and AURKC-containing complexes exist; in the complex interacts directly with BIRC5/survivin and INCENP. Interacts with TACC1. In terms of tissue distribution, expressed only in testis.

It is found in the nucleus. The protein localises to the chromosome. It localises to the centromere. The protein resides in the cytoplasm. Its subcellular location is the cytoskeleton. It is found in the spindle. It catalyses the reaction L-seryl-[protein] + ATP = O-phospho-L-seryl-[protein] + ADP + H(+). It carries out the reaction L-threonyl-[protein] + ATP = O-phospho-L-threonyl-[protein] + ADP + H(+). Okadaic acid, an inhibitor of protein phosphatase 1 (PP1), protein phosphatase 2A (PP2A) and protein phosphatase 5 (PP5), increases AURKC activity. AURKC is also stabilized through its interaction with INCENP, which also acts as an activator. Its function is as follows. Serine/threonine-protein kinase component of the chromosomal passenger complex (CPC), a complex that acts as a key regulator of mitosis. The CPC complex has essential functions at the centromere in ensuring correct chromosome alignment and segregation and is required for chromatin-induced microtubule stabilization and spindle assembly. Also plays a role in meiosis and more particularly in spermatogenesis. Has redundant cellular functions with AURKB and can rescue an AURKB knockdown. Like AURKB, AURKC phosphorylates histone H3 at 'Ser-10' and 'Ser-28'. AURKC phosphorylates the CPC complex subunits BIRC5/survivin and INCENP leading to increased AURKC activity. Phosphorylates TACC1, another protein involved in cell division, at 'Ser-228'. In Mus musculus (Mouse), this protein is Aurora kinase C (Aurkc).